The following is an 82-amino-acid chain: M-zodatoxin-Lt3a (82 aa).

Positions 1 to 22 (MKTYAVLLALVVAFVCIAESTG) are cleaved as a signal peptide. Residues 23–61 (YPVEDLEDDELTELEAEALLEDLLEDLELEDLDYNEEAR) constitute a propeptide that is removed on maturation. The Processing quadruplet motif motif lies at 58–61 (EEAR). A81 bears the Alanine amide mark.

This sequence belongs to the cationic peptide 03 (latarcin) family. 03 subfamily. Cleavage of the propeptide depends on the processing quadruplet motif (XXXR, with at least one of X being E). Expressed by the venom gland.

It is found in the secreted. The protein localises to the target cell membrane. Its function is as follows. It has antimicrobial activity against Gram-positive bacteria (A.globiformis VKM Ac-1112 (MIC=0.3 uM), and B.subtilis VKM B-501 (MIC=1.2 uM)), Gram-negative bacteria (E.coli DH5-alpha (MIC=2.5 uM), E.coli MH1 (MIC=6.0 uM), and P.aeruginosa PAO1 (MIC&gt;40 uM)), and yeasts (P.pastoris GS115 (MIC=20 uM), and S.cerevisiae Y190 (MIC=20 uM)). Causes paralysis, but is not lethal when injected into insect (M.domestica) larvae. A second study reports antibacterial activity against E.coli (MIC=100 uM) and S.aureus (MIC=84 uM). Furthermore, increases efficacy of antibiotics (chloramphenicol, streptomycin, kanamycin, novobiocin) when tested against E.coli, probably by facilitating their incorporation into the bacteria. This Lachesana tarabaevi (Spider) protein is M-zodatoxin-Lt3a.